Here is a 144-residue protein sequence, read N- to C-terminus: Large ribosomal subunit protein uL15 (144 aa).

A disordered region spans residues 1–52 (MRLNTISSAPGAKQAEKRVGRGIGSGWGKTCGRGHKGQKSRSGGFHKVGFEG). The span at 21–31 (RGIGSGWGKTC) shows a compositional bias: gly residues.

This sequence belongs to the universal ribosomal protein uL15 family. As to quaternary structure, part of the 50S ribosomal subunit.

Functionally, binds to the 23S rRNA. In Nitrosococcus oceani (strain ATCC 19707 / BCRC 17464 / JCM 30415 / NCIMB 11848 / C-107), this protein is Large ribosomal subunit protein uL15.